The chain runs to 452 residues: Bifunctional F420 biosynthesis protein FbiB (452 aa).

The interval 1–248 is coenzyme F420:L-glutamate ligase; the sequence is MVSAPGDHAG…AGEEDLFWLG (248 aa). GTP-binding positions include 24-27, serine 54, and lysine 59; that span reads LPEF. Aspartate 113 is a binding site for a divalent metal cation. Asparagine 116 contributes to the GTP binding site. A divalent metal cation contacts are provided by aspartate 154 and threonine 155. Positions 249–452 are dehydro-coenzyme F420-0 reductase; it reads TAEAVERGRR…RDPGDGLVER (204 aa). FMN contacts are provided by residues 264 to 268 and alanine 292; that span reads RRSVR. Residue aspartate 324 coordinates coenzyme F420-(gamma-Glu)n. FMN is bound by residues glycine 403 and arginine 440.

The protein in the N-terminal section; belongs to the CofE family. The cofactor is Mg(2+). Mn(2+) serves as cofactor. K(+) is required as a cofactor.

The enzyme catalyses oxidized coenzyme F420-0 + GTP + L-glutamate = oxidized coenzyme F420-1 + GDP + phosphate + H(+). The catalysed reaction is oxidized coenzyme F420-0 + FMN + H(+) = dehydro coenzyme F420-0 + FMNH2. It catalyses the reaction oxidized coenzyme F420-1 + GTP + L-glutamate = oxidized coenzyme F420-2 + GDP + phosphate + H(+). The protein operates within cofactor biosynthesis; coenzyme F420 biosynthesis. Bifunctional enzyme that catalyzes the GTP-dependent successive addition of two or more gamma-linked L-glutamates to the L-lactyl phosphodiester of 7,8-didemethyl-8-hydroxy-5-deazariboflavin (F420-0) to form polyglutamated F420 derivatives, and the FMNH2-dependent reduction of dehydro-F420-0 to form F420-0. This chain is Bifunctional F420 biosynthesis protein FbiB, found in Nocardia farcinica (strain IFM 10152).